A 385-amino-acid polypeptide reads, in one-letter code: 4-hydroxy-3-methylbut-2-en-1-yl diphosphate synthase (flavodoxin) 2 (385 aa).

The [4Fe-4S] cluster site is built by Cys281, Cys284, Cys316, and Glu323.

This sequence belongs to the IspG family. [4Fe-4S] cluster serves as cofactor.

The enzyme catalyses (2E)-4-hydroxy-3-methylbut-2-enyl diphosphate + oxidized [flavodoxin] + H2O + 2 H(+) = 2-C-methyl-D-erythritol 2,4-cyclic diphosphate + reduced [flavodoxin]. It functions in the pathway isoprenoid biosynthesis; isopentenyl diphosphate biosynthesis via DXP pathway; isopentenyl diphosphate from 1-deoxy-D-xylulose 5-phosphate: step 5/6. Converts 2C-methyl-D-erythritol 2,4-cyclodiphosphate (ME-2,4cPP) into 1-hydroxy-2-methyl-2-(E)-butenyl 4-diphosphate. The polypeptide is 4-hydroxy-3-methylbut-2-en-1-yl diphosphate synthase (flavodoxin) 2 (Streptomyces avermitilis (strain ATCC 31267 / DSM 46492 / JCM 5070 / NBRC 14893 / NCIMB 12804 / NRRL 8165 / MA-4680)).